A 155-amino-acid chain; its full sequence is 6,7-dimethyl-8-ribityllumazine synthase (155 aa).

Residues Phe23, Ala57–Glu59, and Ala81–Ile83 each bind 5-amino-6-(D-ribitylamino)uracil. Ser86–Thr87 serves as a coordination point for (2S)-2-hydroxy-3-oxobutyl phosphate. The active-site Proton donor is His89. Phe114 provides a ligand contact to 5-amino-6-(D-ribitylamino)uracil. Arg128 serves as a coordination point for (2S)-2-hydroxy-3-oxobutyl phosphate.

Belongs to the DMRL synthase family.

It catalyses the reaction (2S)-2-hydroxy-3-oxobutyl phosphate + 5-amino-6-(D-ribitylamino)uracil = 6,7-dimethyl-8-(1-D-ribityl)lumazine + phosphate + 2 H2O + H(+). It functions in the pathway cofactor biosynthesis; riboflavin biosynthesis; riboflavin from 2-hydroxy-3-oxobutyl phosphate and 5-amino-6-(D-ribitylamino)uracil: step 1/2. Its function is as follows. Catalyzes the formation of 6,7-dimethyl-8-ribityllumazine by condensation of 5-amino-6-(D-ribitylamino)uracil with 3,4-dihydroxy-2-butanone 4-phosphate. This is the penultimate step in the biosynthesis of riboflavin. In Geobacter sp. (strain M21), this protein is 6,7-dimethyl-8-ribityllumazine synthase.